Here is a 1312-residue protein sequence, read N- to C-terminus: AT-rich interactive domain-containing protein 4B (1312 aa).

Disordered stretches follow at residues 124-166 and 266-306; these read PLTN…EDDR and KTEL…EPFP. A phosphoserine mark is found at serine 276, serine 295, and serine 296. The segment covering 277-305 has biased composition (acidic residues); it reads EAEEEEEEEDDEKEKEDNSSEEEEEIEPF. In terms of domain architecture, ARID spans 306–398; the sequence is PEERENFLQQ…YLYGFEEYCR (93 aa). Residues lysine 429, lysine 440, and lysine 462 each participate in a glycyl lysine isopeptide (Lys-Gly) (interchain with G-Cter in SUMO2) cross-link. 5 disordered regions span residues 458–577, 635–680, 708–894, 909–1212, and 1252–1288; these read EIER…KVQV, IKHR…EMVS, QASE…TTGF, LNNS…NRLP, and SEVASIDRRRKRLKKKERESAATSSSSSSPSSSSITA. The tract at residues 465–473 is antigenic epitope; that stretch reads IKPSLGSKK. Serine 483 is modified (phosphoserine). Positions 483–496 are enriched in basic and acidic residues; the sequence is SDQEKEVNIKKPED. Residue lysine 517 forms a Glycyl lysine isopeptide (Lys-Gly) (interchain with G-Cter in SUMO2) linkage. Acidic residues predominate over residues 532–567; sequence NKEEDEDDEEAEEEEEEEEEEEDEDDDDNNEEEEFE. The region spanning 572–624 is the Tudor-knot domain; the sequence is GMKVQVRYGRGKNQKMYEASIKDSDVEGGEVLYLVHYCGWNVRYDEWIKADKI. The segment covering 643-656 has biased composition (basic and acidic residues); the sequence is NKLDKEKDKDEKYS. Residues serine 666, serine 675, and serine 717 each carry the phosphoserine modification. Basic and acidic residues-rich tracts occupy residues 722-754 and 778-787; these read ERGAQDMDNNGKEESKIDHLTNNRNDLISKEEQ and SPERLRKDIE. A coiled-coil region spans residues 728-754; it reads MDNNGKEESKIDHLTNNRNDLISKEEQ. Residue lysine 751 forms a Glycyl lysine isopeptide (Lys-Gly) (interchain with G-Cter in SUMO2) linkage. Serine 778 and serine 790 each carry phosphoserine. Acidic residues predominate over residues 788–799; the sequence is VLSEDTDYEEDE. Threonine 793 is subject to Phosphothreonine. Basic and acidic residues-rich tracts occupy residues 807–816, 828–852, 909–927, and 995–1010; these read VKKDTTDKSS, CNTEECLKTGSPGKKEEKAKNKESL, LNNSDERLQNSRAKDRKDV, and KPIEEKTVEVNDRKAE. Residue serine 1014 is modified to Phosphoserine. Threonine 1026 bears the Phosphothreonine mark. Residues 1028–1037 are compositionally biased toward low complexity; the sequence is ESPSSVTVTE. Serine 1029 is subject to Phosphoserine. Residues 1038-1047 show a composition bias toward polar residues; that stretch reads GSRQQSSVTV. Over residues 1056–1065 the composition is skewed to basic and acidic residues; that stretch reads EEVRSIKSET. A compositionally biased stretch (low complexity) spans 1087–1101; that stretch reads SSPAGFDASVSSSSS. An antigenic epitope region spans residues 1130 to 1137; that stretch reads KKQKRSHK. Positions 1130–1148 are enriched in basic residues; it reads KKQKRSHKATVVNNKKKGK. Position 1150 is a phosphothreonine (threonine 1150). Phosphoserine occurs at positions 1152, 1153, 1155, and 1159. A compositionally biased stretch (polar residues) spans 1162 to 1191; that stretch reads ESITKSQPVKSVSTGMKSHSTKSPARTQSP. Over residues 1196–1208 the composition is skewed to basic and acidic residues; the sequence is KNGDKDPDLKEPS. The stretch at 1231–1270 forms a coiled coil; sequence ERITILQEKLQEIRKHYLSLKSEVASIDRRRKRLKKKERE. Positions 1272–1288 are enriched in low complexity; the sequence is AATSSSSSSPSSSSITA.

In terms of assembly, component of a Sin3A corepressor complex consisting of SIN3A, SAP130, SUDS3/SAP45, SAP180, HDAC1 and HDAC2. Interacts with ARID4A. Interacts with AR. Highly expressed in the testis and in breast, lung, colon, pancreatic and ovarian cancers. Expressed at low levels in the thymus, prostate and ovary.

Its subcellular location is the nucleus. It is found in the cytoplasm. Acts as a transcriptional repressor. May function in the assembly and/or enzymatic activity of the Sin3A corepressor complex or in mediating interactions between the complex and other regulatory complexes. Plays a role in the regulation of epigenetic modifications at the PWS/AS imprinting center near the SNRPN promoter, where it might function as part of a complex with RB1 and ARID4A. Involved in spermatogenesis, together with ARID4A, where it functions as a transcriptional coactivator for AR (androgen receptor) and enhances expression of genes required for sperm maturation. Regulates expression of the tight junction protein CLDN3 in the testis, which is important for integrity of the blood-testis barrier. Plays a role in myeloid homeostasis where it regulates the histone methylation state of bone marrow cells and expression of various genes involved in hematopoiesis. May function as a leukemia suppressor. This chain is AT-rich interactive domain-containing protein 4B (ARID4B), found in Homo sapiens (Human).